Reading from the N-terminus, the 207-residue chain is Probable GTP-binding protein EngB (207 aa).

The EngB-type G domain maps to 22–194 (DLPEVAFAGR…LQRLDVALSD (173 aa)). Residues 30–37 (GRSNVGKS), 57–61 (GRTQL), 75–78 (DLPG), 142–145 (TKVD), and 173–175 (FSA) contribute to the GTP site. Residues S37 and T59 each contribute to the Mg(2+) site.

The protein belongs to the TRAFAC class TrmE-Era-EngA-EngB-Septin-like GTPase superfamily. EngB GTPase family. Requires Mg(2+) as cofactor.

Its function is as follows. Necessary for normal cell division and for the maintenance of normal septation. This is Probable GTP-binding protein EngB from Syntrophotalea carbinolica (strain DSM 2380 / NBRC 103641 / GraBd1) (Pelobacter carbinolicus).